We begin with the raw amino-acid sequence, 273 residues long: Dermonecrotic toxin SdSicTox-betaIIB1bxi (273 aa).

Residue H4 is part of the active site. The Mg(2+) site is built by E24 and D26. The active-site Nucleophile is the H40. Cystine bridges form between C44–C50 and C46–C189. D84 is a binding site for Mg(2+).

The protein belongs to the arthropod phospholipase D family. Class II subfamily. Mg(2+) serves as cofactor. In terms of tissue distribution, expressed by the venom gland.

It localises to the secreted. It carries out the reaction an N-(acyl)-sphingosylphosphocholine = an N-(acyl)-sphingosyl-1,3-cyclic phosphate + choline. It catalyses the reaction an N-(acyl)-sphingosylphosphoethanolamine = an N-(acyl)-sphingosyl-1,3-cyclic phosphate + ethanolamine. The enzyme catalyses a 1-acyl-sn-glycero-3-phosphocholine = a 1-acyl-sn-glycero-2,3-cyclic phosphate + choline. The catalysed reaction is a 1-acyl-sn-glycero-3-phosphoethanolamine = a 1-acyl-sn-glycero-2,3-cyclic phosphate + ethanolamine. Functionally, dermonecrotic toxins cleave the phosphodiester linkage between the phosphate and headgroup of certain phospholipids (sphingolipid and lysolipid substrates), forming an alcohol (often choline) and a cyclic phosphate. This toxin acts on sphingomyelin (SM). It may also act on ceramide phosphoethanolamine (CPE), lysophosphatidylcholine (LPC) and lysophosphatidylethanolamine (LPE), but not on lysophosphatidylserine (LPS), and lysophosphatidylglycerol (LPG). It acts by transphosphatidylation, releasing exclusively cyclic phosphate products as second products. Induces dermonecrosis, hemolysis, increased vascular permeability, edema, inflammatory response, and platelet aggregation. In Sicarius cf. damarensis (strain GJB-2008) (Six-eyed sand spider), this protein is Dermonecrotic toxin SdSicTox-betaIIB1bxi.